Consider the following 252-residue polypeptide: Hydroxyacylglutathione hydrolase (252 aa).

Zn(2+) contacts are provided by histidine 54, histidine 56, aspartate 58, histidine 59, histidine 113, aspartate 132, and histidine 170.

Belongs to the metallo-beta-lactamase superfamily. Glyoxalase II family. Monomer. Zn(2+) serves as cofactor.

It catalyses the reaction an S-(2-hydroxyacyl)glutathione + H2O = a 2-hydroxy carboxylate + glutathione + H(+). It participates in secondary metabolite metabolism; methylglyoxal degradation; (R)-lactate from methylglyoxal: step 2/2. Functionally, thiolesterase that catalyzes the hydrolysis of S-D-lactoyl-glutathione to form glutathione and D-lactic acid. This chain is Hydroxyacylglutathione hydrolase, found in Synechococcus sp. (strain JA-2-3B'a(2-13)) (Cyanobacteria bacterium Yellowstone B-Prime).